Here is a 379-residue protein sequence, read N- to C-terminus: Alcohol dehydrogenase class-3 (379 aa).

Zn(2+) contacts are provided by cysteine 47, histidine 69, cysteine 99, cysteine 102, cysteine 105, cysteine 113, and cysteine 176.

Belongs to the zinc-containing alcohol dehydrogenase family. Class-III subfamily. As to quaternary structure, homodimer. Zn(2+) is required as a cofactor.

It localises to the cytoplasm. It carries out the reaction a primary alcohol + NAD(+) = an aldehyde + NADH + H(+). The enzyme catalyses a secondary alcohol + NAD(+) = a ketone + NADH + H(+). It catalyses the reaction S-(hydroxymethyl)glutathione + NADP(+) = S-formylglutathione + NADPH + H(+). The catalysed reaction is S-(hydroxymethyl)glutathione + NAD(+) = S-formylglutathione + NADH + H(+). Class-III ADH is remarkably ineffective in oxidizing ethanol, but it readily catalyzes the oxidation of long-chain primary alcohols and the oxidation of S-(hydroxymethyl) glutathione. This Dictyostelium discoideum (Social amoeba) protein is Alcohol dehydrogenase class-3 (adh5).